Here is a 269-residue protein sequence, read N- to C-terminus: Glutamate racemase (269 aa).

Substrate-binding positions include 7 to 8 (DS) and 39 to 40 (YG). Residue Cys70 is the Proton donor/acceptor of the active site. A substrate-binding site is contributed by 71–72 (NT). Residue Cys194 is the Proton donor/acceptor of the active site. 195-196 (TH) is a binding site for substrate.

This sequence belongs to the aspartate/glutamate racemases family.

It catalyses the reaction L-glutamate = D-glutamate. Its pathway is cell wall biogenesis; peptidoglycan biosynthesis. Functionally, provides the (R)-glutamate required for cell wall biosynthesis. This chain is Glutamate racemase, found in Ruegeria sp. (strain TM1040) (Silicibacter sp.).